Consider the following 712-residue polypeptide: Solute carrier organic anion transporter family member 1C1 (712 aa).

Residues 1–43 (MDTSSKENIQLFCKTSVQPVGRPSFKTEYPSSEEKQPCCGELK) are Cytoplasmic-facing. A helical transmembrane segment spans residues 44-63 (VFLCALSFVYFAKALAEGYL). The Extracellular segment spans residues 64-82 (KSTITQIERRFDIPSSLVG). Residues 83 to 103 (VIDGSFEIGNLLVITFVSYFG) form a helical membrane-spanning segment. Residues 104 to 109 (AKLHRP) are Cytoplasmic-facing. The helical transmembrane segment at 110 to 134 (KIIGAGCVIMGVGTLLIAMPQFFME) threads the bilayer. The Extracellular portion of the chain corresponds to 135-184 (QYKYERYSPSSNSTLSISPCLLESSSQLPVSVMEKSKSKISNECEVDTSS). N146 carries an N-linked (GlcNAc...) asparagine glycan. A helical transmembrane segment spans residues 185-213 (SMWIYVFLGNLLRGIGETPIQPLGIAYLD). Over 214-232 (DFASEDNAAFYIGCVQTVA) the chain is Cytoplasmic. The chain crosses the membrane as a helical span at residues 233–253 (IIGPIFGFLLGSLCAKLYVDI). Residues 254–271 (GFVNLDHITITPKDPQWV) lie on the Extracellular side of the membrane. A helical transmembrane segment spans residues 272–296 (GAWWLGYLIAGIISLLAAVPFWYLP). Residues 297-348 (KSLPRSQSREDSNSSSEKSKFIIDDHTDYQTPQGENAKIMEMARDFLPSLKN) lie on the Cytoplasmic side of the membrane. Residues 349–370 (LFGNPVYFLYLCTSTVQFNSLF) traverse the membrane as a helical segment. At 371 to 390 (GMVTYKPKYIEQQYGQSSSR) the chain is on the extracellular side. The chain crosses the membrane as a helical span at residues 391 to 414 (ANFVIGLINIPAVALGIFSGGIVM). Residues 415 to 418 (KKFR) are Cytoplasmic-facing. The helical transmembrane segment at 419–442 (ISVCGAAKLYLGSSVFGYLLFLSL) threads the bilayer. Topologically, residues 443 to 554 (FALGCENSDV…NGCPQMFLYF (112 aa)) are extracellular. The Kazal-like domain occupies 470–525 (RALFSDCNSRCKCSETKWEPMCGENGITYVSACLAGCQTSNRSGKNIIFYNCTCVG). 3 disulfides stabilise this stretch: C476–C506, C482–C502, and C491–C523. N510, N520, and N533 each carry an N-linked (GlcNAc...) asparagine glycan. The helical transmembrane segment at 555–577 (LVISVITSYTLSLGGIPGYILLL) threads the bilayer. Over 578 to 586 (RCIKPQLKS) the chain is Cytoplasmic. The helical transmembrane segment at 587-612 (FALGIYTLAIRVLAGIPAPVYFGVLI) threads the bilayer. The Extracellular portion of the chain corresponds to 613-646 (DTSCLKWGFKRCGSRGSCRLYDSNVFRHIYLGLT). A helical transmembrane segment spans residues 647–664 (VILGTVSILLSIAVLFIL). Residues 665–712 (KKNYVSKHRSFITKRERTMVSTRFQKENYTTSDHLLQPNYWPGKETQL) lie on the Cytoplasmic side of the membrane.

This sequence belongs to the organo anion transporter (TC 2.A.60) family. Highly expressed in brain and in Leydig cells in testis. Localized in nests of Leydig cells (at protein level). Expressed in choroid plexus (at protein level). Not strongly enriched in cerebral microvessels.

It localises to the cell membrane. The catalysed reaction is 3,3',5'-triiodo-L-thyronine(out) = 3,3',5'-triiodo-L-thyronine(in). It carries out the reaction L-thyroxine(out) = L-thyroxine(in). It catalyses the reaction L-thyroxine sulfate(out) = L-thyroxine sulfate(in). Functionally, mediates the Na(+)-independent high affinity transport of organic anions such as the thyroid hormones L-thyroxine (T4), L-thyroxine sulfate (T4S), and 3,3',5'-triiodo-L-thyronine (reverse T3, rT3) at the plasma membrane. Regulates T4 levels in different brain regions by transporting T4, and also by serving as an export pump for T4S, which is a source of T4 after hydrolysis by local sulfatases. Increases the access of these substrates to the intracellular sites where they are metabolized by the deiodinases. Other potential substrates, such as triiodothyronine (T3), 17-beta-glucuronosyl estradiol (17beta-estradiol 17-O-(beta-D-glucuronate)), estrone-3-sulfate (E1S) and sulfobromophthalein (BSP) are transported with much lower efficiency. Transports T4 and E1S in a pH-insensitive manner. Facilitates the transport of thyroid hormones across the blood-brain barrier and into glia and neuronal cells in the brain. This chain is Solute carrier organic anion transporter family member 1C1 (SLCO1C1), found in Homo sapiens (Human).